We begin with the raw amino-acid sequence, 410 residues long: MQIYKVGGAVRDRLLGRPVTDIDWVVVGASSEEMLARGYRPVGADFPVFLHPQSGEEYALARTERKSGRGYGGFTFHASPDVTLEEDLTRRDLTINAMAEDEQGRVIDPYGGQADLEARLLRHVSPAFAEDPLRVLRVARFAARYAGLGFRVAAETLALMRQLAGSGELQALTPERSWKEISRALMEPNPEVFVQVLHDCGALAELMPEVEALFGVPQPAAHHPEIDTGVHVLSVLQQCARHHQPLTVRWACLLHDLGKGLTREADWPRHIAHETRGLPLIDAINRRFRVPRDCQELARLVGEYHTHAHRALELRPTTLLELLQSFDVYRRPQRFEEFVAASEMDARGRHGLEQRDYPQAAYLLGAAQAARAVSVKPLVEKGLKGAELGEALKRARLAALKAYKEERGKA.

ATP-binding residues include G8 and R11. CTP is bound by residues G8 and R11. Residues D21 and D23 each coordinate Mg(2+). Positions 91, 137, and 140 each coordinate ATP. CTP contacts are provided by R91, R137, and R140. Residues 228–329 (TGVHVLSVLQ…LELLQSFDVY (102 aa)) enclose the HD domain.

This sequence belongs to the tRNA nucleotidyltransferase/poly(A) polymerase family. Bacterial CCA-adding enzyme type 1 subfamily. Monomer. Can also form homodimers and oligomers. Requires Mg(2+) as cofactor. Ni(2+) is required as a cofactor.

The catalysed reaction is a tRNA precursor + 2 CTP + ATP = a tRNA with a 3' CCA end + 3 diphosphate. The enzyme catalyses a tRNA with a 3' CCA end + 2 CTP + ATP = a tRNA with a 3' CCACCA end + 3 diphosphate. In terms of biological role, catalyzes the addition and repair of the essential 3'-terminal CCA sequence in tRNAs without using a nucleic acid template. Adds these three nucleotides in the order of C, C, and A to the tRNA nucleotide-73, using CTP and ATP as substrates and producing inorganic pyrophosphate. tRNA 3'-terminal CCA addition is required both for tRNA processing and repair. Also involved in tRNA surveillance by mediating tandem CCA addition to generate a CCACCA at the 3' terminus of unstable tRNAs. While stable tRNAs receive only 3'-terminal CCA, unstable tRNAs are marked with CCACCA and rapidly degraded. This Pseudomonas paraeruginosa (strain DSM 24068 / PA7) (Pseudomonas aeruginosa (strain PA7)) protein is Multifunctional CCA protein.